A 270-amino-acid chain; its full sequence is tRNA pseudouridine synthase A (270 aa).

Residue D52 is the Nucleophile of the active site. Y110 contacts substrate.

This sequence belongs to the tRNA pseudouridine synthase TruA family. As to quaternary structure, homodimer.

The enzyme catalyses uridine(38/39/40) in tRNA = pseudouridine(38/39/40) in tRNA. Functionally, formation of pseudouridine at positions 38, 39 and 40 in the anticodon stem and loop of transfer RNAs. This is tRNA pseudouridine synthase A from Paraburkholderia phytofirmans (strain DSM 17436 / LMG 22146 / PsJN) (Burkholderia phytofirmans).